Reading from the N-terminus, the 641-residue chain is Epsin-2 (641 aa).

6 residues coordinate a 1,2-diacyl-sn-glycero-3-phospho-(1D-myo-inositol-4,5-bisphosphate): R8, K11, R25, N30, R63, and H73. Positions 12-144 (NIVNNYSEAE…KDEERLKAER (133 aa)) constitute an ENTH domain. Residues R153 and Q156 each carry the phosphoserine modification. Residues 163–181 (SNQITFGRGSSQPNLSTSH) show a composition bias toward polar residues. Disordered stretches follow at residues 163–214 (SNQI…GAPL) and 255–275 (RATS…TSGE). At R170 the chain carries Omega-N-methylarginine. Residues S173, S192, and S195 each carry the phosphoserine modification. A compositionally biased stretch (polar residues) spans 259–273 (PRVSSELEQARPQTS). UIM domains follow at residues 275–294 (EEEL…AEQE) and 300–319 (GDDL…TVKI). The tract at residues 340–425 (ALPSSGPAAQ…QPASSAGKRA (86 aa)) is disordered. 6 consecutive repeat copies span residues 352-354 (EPW), 364-366 (NPW), 377-379 (DPW), 391-393 (DPW), 409-411 (DPW), and 427-429 (DAW). Residues 352–639 (EPWGPSASTN…AQATGTTNPF (288 aa)) form a 6 X 3 AA repeats of [DE]-P-W region. The span at 408-421 (SDPWAASQQPASSA) shows a compositional bias: low complexity. Residues 470 to 512 (TAESVTSLPSQNNGTTSPDPFESQPLTVASSKPSSARKTPESF) form a disordered region. Polar residues predominate over residues 472 to 506 (ESVTSLPSQNNGTTSPDPFESQPLTVASSKPSSAR). Phosphoserine is present on S486. T508 carries the phosphothreonine modification. 2 tandem repeats follow at residues 537–539 (NPF) and 552–554 (NPF). Positions 537–639 (NPFLAPGAPA…AQATGTTNPF (103 aa)) are 3 X 3 AA repeats of N-P-F. S570 carries the post-translational modification Phosphoserine. Residues 637 to 639 (NPF) form repeat 3.

This sequence belongs to the epsin family. Binds EPS15. Interacts with ITSN1. Binds AP-2 and clathrin. Interacts with UBQLN2. Ubiquitinated. As to expression, highest expression is found in brain. Detected at lower levels in lung and liver.

It is found in the cytoplasm. The protein localises to the cytoplasmic vesicle. It localises to the clathrin-coated vesicle. In terms of biological role, plays a role in the formation of clathrin-coated invaginations and endocytosis. The chain is Epsin-2 (EPN2) from Homo sapiens (Human).